The chain runs to 512 residues: ATP synthase subunit alpha, chloroplastic (512 aa).

170–177 (GDRQTGKT) is a binding site for ATP.

It belongs to the ATPase alpha/beta chains family. In terms of assembly, F-type ATPases have 2 components, CF(1) - the catalytic core - and CF(0) - the membrane proton channel. CF(1) has five subunits: alpha(3), beta(3), gamma(1), delta(1), epsilon(1). CF(0) has four main subunits: a, b, b' and c.

It is found in the plastid. The protein localises to the chloroplast thylakoid membrane. The enzyme catalyses ATP + H2O + 4 H(+)(in) = ADP + phosphate + 5 H(+)(out). Produces ATP from ADP in the presence of a proton gradient across the membrane. The alpha chain is a regulatory subunit. In Chaetosphaeridium globosum (Charophycean green alga), this protein is ATP synthase subunit alpha, chloroplastic.